The sequence spans 402 residues: Myb-related protein 1 (402 aa).

In terms of domain architecture, HTH myb-type spans 42–102 (TDAKPRLKWT…HLQKYRLSKN (61 aa)). A DNA-binding region (H-T-H motif) is located at residues 73 to 98 (PKTIMKVMGIPGLTLYHLKSHLQKYR). Residues 148–168 (SDALQMQIEVQRRLHEQLEVQ) are a coiled coil. Positions 161 to 166 (LHEQLE) match the LHEQLE motif. A compositionally biased stretch (polar residues) spans 238-260 (QQMQKTYPPNSSLDSCLTSSEGT). Disordered regions lie at residues 238 to 266 (QQMQ…APKM), 344 to 363 (EHRG…FNEN), and 382 to 402 (HDEN…FSWN).

Belongs to the MYB-CC family. In terms of assembly, isoforms 1 and 2: homodimer. Isoform 3: loss of dimerization. In terms of tissue distribution, expressed in phloem and/or cambium.

It localises to the nucleus. Transcription factor that may act on the GAL1 promoter. Acts redundantly with MYR2 as a repressor of flowering and organ elongation under decreased light intensity. Represses gibberellic acid (GA)-dependent responses and affects levels of bioactive GA. This chain is Myb-related protein 1, found in Arabidopsis thaliana (Mouse-ear cress).